Reading from the N-terminus, the 71-residue chain is UPF0434 protein APH_0052 (71 aa).

The segment covering 52-63 (RKLQPEEPKEGS) has biased composition (basic and acidic residues). A disordered region spans residues 52 to 71 (RKLQPEEPKEGSELQSSDNQ).

This sequence belongs to the UPF0434 family.

The sequence is that of UPF0434 protein APH_0052 from Anaplasma phagocytophilum (strain HZ).